The chain runs to 168 residues: Mediator of RNA polymerase II transcription subunit 11 (168 aa).

Positions 126 to 168 (ETLENESNNEIQPKTESDTNQVETNENGNDINNKESEDIEMKE) are disordered. Residues 130–156 (NESNNEIQPKTESDTNQVETNENGNDI) are compositionally biased toward polar residues. Positions 157-168 (NNKESEDIEMKE) are enriched in basic and acidic residues.

Belongs to the Mediator complex subunit 11 family. In terms of assembly, component of the Mediator complex.

The protein resides in the nucleus. In terms of biological role, component of the Mediator complex, a coactivator involved in the regulated transcription of nearly all RNA polymerase II-dependent genes. Mediator functions as a bridge to convey information from gene-specific regulatory proteins to the basal RNA polymerase II transcription machinery. Mediator is recruited to promoters by direct interactions with regulatory proteins and serves as a scaffold for the assembly of a functional pre-initiation complex with RNA polymerase II and the general transcription factors. This Candida albicans (strain SC5314 / ATCC MYA-2876) (Yeast) protein is Mediator of RNA polymerase II transcription subunit 11 (MED11).